Reading from the N-terminus, the 155-residue chain is SsrA-binding protein (155 aa).

This sequence belongs to the SmpB family.

The protein localises to the cytoplasm. Required for rescue of stalled ribosomes mediated by trans-translation. Binds to transfer-messenger RNA (tmRNA), required for stable association of tmRNA with ribosomes. tmRNA and SmpB together mimic tRNA shape, replacing the anticodon stem-loop with SmpB. tmRNA is encoded by the ssrA gene; the 2 termini fold to resemble tRNA(Ala) and it encodes a 'tag peptide', a short internal open reading frame. During trans-translation Ala-aminoacylated tmRNA acts like a tRNA, entering the A-site of stalled ribosomes, displacing the stalled mRNA. The ribosome then switches to translate the ORF on the tmRNA; the nascent peptide is terminated with the 'tag peptide' encoded by the tmRNA and targeted for degradation. The ribosome is freed to recommence translation, which seems to be the essential function of trans-translation. In Lactococcus lactis subsp. cremoris (strain MG1363), this protein is SsrA-binding protein.